The primary structure comprises 130 residues: Histone H2A type 1-C (130 aa).

A disordered region spans residues 1–22; it reads MSGRGKQGGKARAKAKSRSSRA. S2 carries the post-translational modification N-acetylserine. Position 2 is a phosphoserine; by RPS6KA5 (S2). R4 is modified (citrulline; alternate). R4 bears the Symmetric dimethylarginine; by PRMT5; alternate mark. Residues K6 and K10 each carry the N6-(2-hydroxyisobutyryl)lysine; alternate modification. Position 6 is an N6-acetyllysine; alternate (K6). Residues 7-19 are compositionally biased toward basic residues; the sequence is QGGKARAKAKSRS. N6-(beta-hydroxybutyryl)lysine; alternate is present on residues K10 and K14. K10 carries the post-translational modification N6-lactoyllysine; alternate. K10 is subject to N6-succinyllysine; alternate. Residue K14 forms a Glycyl lysine isopeptide (Lys-Gly) (interchain with G-Cter in ubiquitin); alternate linkage. A Glycyl lysine isopeptide (Lys-Gly) (interchain with G-Cter in ubiquitin) cross-link involves residue K16. K37 bears the N6-(2-hydroxyisobutyryl)lysine; alternate mark. K37 carries the N6-(beta-hydroxybutyryl)lysine; alternate modification. The residue at position 37 (K37) is an N6-crotonyllysine; alternate. An N6-(2-hydroxyisobutyryl)lysine mark is found at K75 and K76. K96 carries the post-translational modification N6-(2-hydroxyisobutyryl)lysine; alternate. K96 is modified (N6-(beta-hydroxybutyryl)lysine; alternate). Position 96 is an N6-succinyllysine; alternate (K96). K96 is modified (N6-glutaryllysine; alternate). Q105 is modified (N5-methylglutamine). N6-(2-hydroxyisobutyryl)lysine; alternate is present on K119. Residue K119 is modified to N6-(beta-hydroxybutyryl)lysine; alternate. 2 positions are modified to N6-crotonyllysine; alternate: K119 and K120. N6-glutaryllysine; alternate is present on residues K119 and K120. K120 participates in a covalent cross-link: Glycyl lysine isopeptide (Lys-Gly) (interchain with G-Cter in ubiquitin); alternate. The residue at position 121 (T121) is a Phosphothreonine; by DCAF1. K126 carries the N6-crotonyllysine; alternate modification. K126 is subject to N6-glutaryllysine; alternate.

Belongs to the histone H2A family. In terms of assembly, the nucleosome is a histone octamer containing two molecules each of H2A, H2B, H3 and H4 assembled in one H3-H4 heterotetramer and two H2A-H2B heterodimers. The octamer wraps approximately 147 bp of DNA. Deiminated on Arg-4 in granulocytes upon calcium entry. Post-translationally, monoubiquitination of Lys-120 (H2AK119Ub) by RING1, TRIM37 and RNF2/RING2 complex gives a specific tag for epigenetic transcriptional repression and participates in X chromosome inactivation of female mammals. It is involved in the initiation of both imprinted and random X inactivation. Ubiquitinated H2A is enriched in inactive X chromosome chromatin. Ubiquitination of H2A functions downstream of methylation of 'Lys-27' of histone H3 (H3K27me). H2AK119Ub by RNF2/RING2 can also be induced by ultraviolet and may be involved in DNA repair. Monoubiquitination of Lys-120 (H2AK119Ub) by TRIM37 may promote transformation of cells in a number of breast cancers. Following DNA double-strand breaks (DSBs), it is ubiquitinated through 'Lys-63' linkage of ubiquitin moieties by the E2 ligase UBE2N and the E3 ligases RNF8 and RNF168, leading to the recruitment of repair proteins to sites of DNA damage. Ubiquitination at Lys-14 and Lys-16 (H2AK13Ub and H2AK15Ub, respectively) in response to DNA damage is initiated by RNF168 that mediates monoubiquitination at these 2 sites, and 'Lys-63'-linked ubiquitin are then conjugated to monoubiquitin; RNF8 is able to extend 'Lys-63'-linked ubiquitin chains in vitro. Deubiquitinated by USP51 at Lys-14 and Lys-16 (H2AK13Ub and H2AK15Ub, respectively) after damaged DNA is repaired. H2AK119Ub and ionizing radiation-induced 'Lys-63'-linked ubiquitination (H2AK13Ub and H2AK15Ub) are distinct events. In terms of processing, phosphorylation on Ser-2 (H2AS1ph) is enhanced during mitosis. Phosphorylation on Ser-2 by RPS6KA5/MSK1 directly represses transcription. Acetylation of H3 inhibits Ser-2 phosphorylation by RPS6KA5/MSK1. Phosphorylation at Thr-121 (H2AT120ph) by DCAF1 is present in the regulatory region of many tumor suppresor genes and down-regulates their transcription. Glutamine methylation at Gln-105 (H2AQ104me) by FBL is specifically dedicated to polymerase I. It is present at 35S ribosomal DNA locus and impairs binding of the FACT complex. Post-translationally, symmetric dimethylation on Arg-4 by the PRDM1/PRMT5 complex may play a crucial role in the germ-cell lineage. In terms of processing, crotonylation (Kcr) is specifically present in male germ cells and marks testis-specific genes in post-meiotic cells, including X-linked genes that escape sex chromosome inactivation in haploid cells. Crotonylation marks active promoters and enhancers and confers resistance to transcriptional repressors. It is also associated with post-meiotically activated genes on autosomes. Lactylated in macrophages by EP300/P300 by using lactoyl-CoA directly derived from endogenous or exogenous lactate, leading to stimulates gene transcription.

The protein resides in the nucleus. It localises to the chromosome. Functionally, core component of nucleosome. Nucleosomes wrap and compact DNA into chromatin, limiting DNA accessibility to the cellular machineries which require DNA as a template. Histones thereby play a central role in transcription regulation, DNA repair, DNA replication and chromosomal stability. DNA accessibility is regulated via a complex set of post-translational modifications of histones, also called histone code, and nucleosome remodeling. This is Histone H2A type 1-C from Homo sapiens (Human).